Here is a 432-residue protein sequence, read N- to C-terminus: Serine/threonine-protein phosphatase 2A activator 1 (432 aa).

Belongs to the PTPA-type PPIase family.

It localises to the cytoplasm. Its subcellular location is the nucleus. The enzyme catalyses [protein]-peptidylproline (omega=180) = [protein]-peptidylproline (omega=0). Its function is as follows. PPIases accelerate the folding of proteins. It catalyzes the cis-trans isomerization of proline imidic peptide bonds in oligopeptides. Acts as a regulatory subunit for PP2A-like phosphatases modulating their activity or substrate specificity, probably by inducing a conformational change in the catalytic subunit, a direct target of the PPIase. Can reactivate inactive phosphatase PP2A-phosphatase methylesterase complexes (PP2Ai) in presence of ATP and Mg(2+) by dissociating the inactive form from the complex. This chain is Serine/threonine-protein phosphatase 2A activator 1 (rrd1), found in Emericella nidulans (strain FGSC A4 / ATCC 38163 / CBS 112.46 / NRRL 194 / M139) (Aspergillus nidulans).